Reading from the N-terminus, the 270-residue chain is L-fucose dehydrogenase (270 aa).

The NAD(+) site is built by R19, I21, D40, K41, D62, V63, N89, Y154, K158, I187, T189, and L191. Y154 acts as the Proton acceptor in catalysis.

It belongs to the short-chain dehydrogenases/reductases (SDR) family. As to quaternary structure, homotetramer. As to expression, detected in retina.

The protein localises to the cytoplasm. It catalyses the reaction L-fucose + NAD(+) = L-fucono-1,5-lactone + NADH + H(+). The enzyme catalyses D-arabinose + NAD(+) = D-arabinono-1,5-lactone + NADH + H(+). The catalysed reaction is L-galactose + NAD(+) = L-galactono-1,5-lactone + NADH + H(+). It participates in carbohydrate degradation; L-fucose degradation. Its function is as follows. Catalyzes the NAD(+)-dependent oxidation of L-fucose, yielding L-fucono-1,5-lactone, which rapidly converts spontaneously to L-fucone-1,4-lactone. Can also act on D-arabinose and L-galactose, with lower catalytic efficiency. Does not use NADPH. May be the initial enzyme of the putative L-fucose degradation pathway in mammals. The protein is L-fucose dehydrogenase (HSD17B14) of Bos taurus (Bovine).